The chain runs to 400 residues: Elongation factor Tu 2 (400 aa).

The tr-type G domain occupies 10 to 209 (KPHVNIGTIG…KVDEYIPTPQ (200 aa)). The tract at residues 19 to 26 (GHVDHGKT) is G1. 19–26 (GHVDHGKT) is a GTP binding site. Thr26 contributes to the Mg(2+) binding site. Residues 60–64 (GITIN) are G2. The G3 stretch occupies residues 81–84 (DCPG). GTP-binding positions include 81 to 85 (DCPGH) and 136 to 139 (NKAD). The G4 stretch occupies residues 136–139 (NKAD). Residues 174-176 (SAL) form a G5 region.

The protein belongs to the TRAFAC class translation factor GTPase superfamily. Classic translation factor GTPase family. EF-Tu/EF-1A subfamily. As to quaternary structure, monomer.

The protein resides in the cytoplasm. The catalysed reaction is GTP + H2O = GDP + phosphate + H(+). Its function is as follows. GTP hydrolase that promotes the GTP-dependent binding of aminoacyl-tRNA to the A-site of ribosomes during protein biosynthesis. The chain is Elongation factor Tu 2 from Carboxydothermus hydrogenoformans (strain ATCC BAA-161 / DSM 6008 / Z-2901).